A 101-amino-acid polypeptide reads, in one-letter code: Iron-sulfur cluster assembly protein CyaY (101 aa).

It belongs to the frataxin family.

In terms of biological role, involved in iron-sulfur (Fe-S) cluster assembly. May act as a regulator of Fe-S biogenesis. This chain is Iron-sulfur cluster assembly protein CyaY, found in Actinobacillus pleuropneumoniae serotype 7 (strain AP76).